The chain runs to 517 residues: ADP-ribosylation factor GTPase-activating protein 3 (517 aa).

The Arf-GAP domain occupies 10 to 126 (LTIFKRLRSV…IKALASQATR (117 aa)). Residues 25–48 (CFDCGAKNPSWASITYGVFLCIDC) form a C4-type zinc finger. The tract at residues 139–200 (VPPSSPPPKE…EQGPSVEGLN (62 aa)) is disordered. Residues 159–176 (EVSSTGWASAQPEPSLTP) show a composition bias toward polar residues. Residue Ser231 is modified to Phosphoserine. Positions 243-263 (NEIEKQAQAVDKMNAQEDLLS) form a coiled coil. Phosphoserine occurs at positions 271 and 275. A compositionally biased stretch (basic and acidic residues) spans 291 to 305 (EKMNMSGKKKAESER). 2 disordered regions span residues 291–349 (EKMN…SDDS) and 362–422 (MELR…QKKF). A compositionally biased stretch (polar residues) spans 312–333 (NSRSGISHSVTSDMQTIEQETP). Ser371 is modified (phosphoserine). The segment covering 379-390 (YWKKETIKDTDP) has biased composition (basic and acidic residues). 6 positions are modified to phosphoserine: Ser429, Ser452, Ser454, Ser456, Ser458, and Ser459.

The protein resides in the cytoplasm. Its subcellular location is the golgi apparatus membrane. With respect to regulation, GAP activity stimulated by phosphatidylinositol 4,5-bisphosphate (PIP2). Its function is as follows. GTPase-activating protein (GAP) for ADP ribosylation factor 1 (ARF1). Hydrolysis of ARF1-bound GTP may lead to dissociation of coatomer from Golgi-derived membranes to allow fusion with target membranes. This Bos taurus (Bovine) protein is ADP-ribosylation factor GTPase-activating protein 3.